The primary structure comprises 217 residues: NADH dehydrogenase (ubiquinone) 23 kDa subunit (217 aa).

Residues 1 to 26 (MSLTMRIFTASRNGQRLFGSHGARLL) constitute a mitochondrion transit peptide. 4Fe-4S ferredoxin-type domains lie at 109–138 (RRYP…IEAE) and 148–177 (TRYD…EGPN). Positions 118, 121, 124, 128, 157, 160, 163, and 167 each coordinate [4Fe-4S] cluster.

This sequence belongs to the complex I 23 kDa subunit family. As to quaternary structure, part of the mitochondrial membrane respiratory chain NADH dehydrogenase (Complex I). This is a component of the iron-sulfur (IP) fragment of the enzyme. [4Fe-4S] cluster serves as cofactor. As to expression, expressed in muscles (at protein level).

Its subcellular location is the mitochondrion. The enzyme catalyses a ubiquinone + NADH + 5 H(+)(in) = a ubiquinol + NAD(+) + 4 H(+)(out). In terms of biological role, core subunit of the mitochondrial membrane respiratory chain NADH dehydrogenase (Complex I) that is believed to belong to the minimal assembly required for catalysis. Complex I functions in the transfer of electrons from NADH to the respiratory chain. The immediate electron acceptor for the enzyme is believed to be ubiquinone. This Drosophila melanogaster (Fruit fly) protein is NADH dehydrogenase (ubiquinone) 23 kDa subunit.